Consider the following 164-residue polypeptide: 6,7-dimethyl-8-ribityllumazine synthase (164 aa).

5-amino-6-(D-ribitylamino)uracil contacts are provided by residues Phe24, 62 to 64 (SFE), and 86 to 88 (AVI). 91 to 92 (QT) is a (2S)-2-hydroxy-3-oxobutyl phosphate binding site. His94 serves as the catalytic Proton donor. Phe119 provides a ligand contact to 5-amino-6-(D-ribitylamino)uracil. (2S)-2-hydroxy-3-oxobutyl phosphate is bound at residue Arg133.

This sequence belongs to the DMRL synthase family.

The catalysed reaction is (2S)-2-hydroxy-3-oxobutyl phosphate + 5-amino-6-(D-ribitylamino)uracil = 6,7-dimethyl-8-(1-D-ribityl)lumazine + phosphate + 2 H2O + H(+). It participates in cofactor biosynthesis; riboflavin biosynthesis; riboflavin from 2-hydroxy-3-oxobutyl phosphate and 5-amino-6-(D-ribitylamino)uracil: step 1/2. In terms of biological role, catalyzes the formation of 6,7-dimethyl-8-ribityllumazine by condensation of 5-amino-6-(D-ribitylamino)uracil with 3,4-dihydroxy-2-butanone 4-phosphate. This is the penultimate step in the biosynthesis of riboflavin. In Synechocystis sp. (strain ATCC 27184 / PCC 6803 / Kazusa), this protein is 6,7-dimethyl-8-ribityllumazine synthase.